The chain runs to 954 residues: Mitogen-activated protein kinase kinase kinase 10 (954 aa).

In terms of domain architecture, SH3 spans P16–P81. The region spanning L98 to I360 is the Protein kinase domain. Residues I104–V112 and K125 each bind ATP. The Proton acceptor role is filled by D222. T258 carries the post-translational modification Phosphothreonine; by autocatalysis. S262 is modified (phosphoserine; by autocatalysis and MAP4K1). Leucine-zipper stretches follow at residues I384–L405 and L419–L440. Disordered stretches follow at residues P490 to H665, R716 to G739, and S757 to H954. 3 positions are modified to phosphoserine: S498, S502, and S506. Over residues A501 to P511 the composition is skewed to low complexity. A Phosphothreonine modification is found at T558. Residues Q566–G578 are compositionally biased toward basic and acidic residues. The span at E611 to D620 shows a compositional bias: acidic residues. Over residues S631–L640 the composition is skewed to low complexity. A compositionally biased stretch (pro residues) spans A773–S790. At R857 the chain carries Omega-N-methylarginine. The span at P913–V927 shows a compositional bias: pro residues.

This sequence belongs to the protein kinase superfamily. STE Ser/Thr protein kinase family. MAP kinase kinase kinase subfamily. In terms of assembly, homodimer. Interacts with SH3RF2. Mg(2+) serves as cofactor. Post-translationally, autophosphorylation on serine and threonine residues within the activation loop plays a role in enzyme activation. In terms of tissue distribution, expressed in brain and skeletal muscle.

The catalysed reaction is L-seryl-[protein] + ATP = O-phospho-L-seryl-[protein] + ADP + H(+). It carries out the reaction L-threonyl-[protein] + ATP = O-phospho-L-threonyl-[protein] + ADP + H(+). With respect to regulation, homodimerization via the leucine zipper domains is required for autophosphorylation and subsequent activation. Activates the JUN N-terminal pathway. The protein is Mitogen-activated protein kinase kinase kinase 10 (MAP3K10) of Homo sapiens (Human).